A 355-amino-acid polypeptide reads, in one-letter code: Elongation factor Ts (355 aa).

The tract at residues 82–85 (TDFV) is involved in Mg(2+) ion dislocation from EF-Tu.

Belongs to the EF-Ts family.

Its subcellular location is the cytoplasm. Associates with the EF-Tu.GDP complex and induces the exchange of GDP to GTP. It remains bound to the aminoacyl-tRNA.EF-Tu.GTP complex up to the GTP hydrolysis stage on the ribosome. The sequence is that of Elongation factor Ts from Helicobacter pylori (strain G27).